The sequence spans 123 residues: Defensin beta 118 (123 aa).

The first 19 residues, 1–19 (MKLLLLALPILVLLPQVIP), serve as a signal peptide directing secretion. Disulfide bonds link C27–C54, C34–C48, and C38–C55. A propeptide spanning residues 65–123 (LPTTSPTPLSDSTPGIIDNILTIRFTTDYFEISSKKDMVEESEAGQGTQTSPPNVHHTS) is cleaved from the precursor. The interval 100–123 (KDMVEESEAGQGTQTSPPNVHHTS) is disordered. Polar residues predominate over residues 109–123 (GQGTQTSPPNVHHTS).

It belongs to the beta-defensin family. In terms of processing, the three-dimensional structure formed by the three intramolecular disulfide bridges is indispensable for antimicrobial activity. In terms of tissue distribution, high-level and epididymis-specific expression. Most abundant in the epithelium of the caput and is also present in the lumen and bound to sperm.

The protein localises to the secreted. In terms of biological role, host defense peptide that exhibits antimicrobial activity against both Gram-negative bacteria, such as E.coli and S.typhimurium, and Gram-positive bacteria, such as S.aureus and B.subtilis. Inhibits cell adhesion of E.coli on intestinal epithelial enterocytes. Causes rapid permeabilization of both the outer and inner membrane of E.coli, leading to morphological alterations on the bacterial surface. Binds to bacterial lipopolysaccharides (LPS) with high affinity, and may thereby be involved in immunoregulation through LPS neutralization. May contribute to epididymal innate immunity and protect the sperm against attack by microorganisms. This is Defensin beta 118 (DEFB118) from Macaca mulatta (Rhesus macaque).